The sequence spans 122 residues: Large ribosomal subunit protein uL14c (122 aa).

Belongs to the universal ribosomal protein uL14 family. In terms of assembly, part of the 50S ribosomal subunit.

The protein localises to the plastid. It localises to the chloroplast. Its function is as follows. Binds to 23S rRNA. This is Large ribosomal subunit protein uL14c from Oenothera biennis (German evening primrose).